A 432-amino-acid chain; its full sequence is Protein ABHD8 (432 aa).

2 disordered regions span residues 47–69 and 121–149; these read KHAG…QGDQ and PAGS…RPKR. A compositionally biased stretch (pro residues) spans 52–61; it reads APAPTPPPPL. A compositionally biased stretch (basic residues) spans 139-149; it reads GRRRRARRPKR. Residues 170-272 form the AB hydrolase-1 domain; sequence VLFFIHGVGG…HKVIMINGGG (103 aa). Active-site charge relay system residues include Ser245, Asp363, and His391.

The protein belongs to the AB hydrolase superfamily. Interacts with NLRP3 (via NACHT and LLR domains); this interaction is enhanced in the presence of NLRP3 inflammasome inducers, such as ATP, nigericin, silica, or alum. Interacts with ZDHHC12.

The protein localises to the cytoplasm. In terms of biological role, negatively regulates NLRP3-driven inflammation. Promotes NLRP3 degradation through the chaperone-mediated autophagy (CMA) pathway, hence attenuating inflammasome activation and IL1B secretion. Acts by recruiting palmitoyltransferase ZDHHC12 to NLRP3, facilitating NLRP3 palmitoylation and subsequent degradation. This is Protein ABHD8 from Bos taurus (Bovine).